A 229-amino-acid polypeptide reads, in one-letter code: Pdp3-interacting factor 1 (229 aa).

Residue Asp-12 is the Nucleophile of the active site. Mg(2+) contacts are provided by Asp-12, Asp-14, and Asp-176. Catalysis depends on Asp-14, which acts as the Proton donor.

Belongs to the HAD-like hydrolase superfamily. Component of the mst2 complex composed of at least eaf6, mst2, nto1, pdp3, ptf1, ptf2 and tfg3. Mg(2+) is required as a cofactor.

It localises to the cytoplasm. It is found in the nucleus. The enzyme catalyses D-ribitol 5-phosphate + H2O = ribitol + phosphate. The catalysed reaction is D-sorbitol 6-phosphate + H2O = D-sorbitol + phosphate. It catalyses the reaction sn-glycerol 1-phosphate + H2O = glycerol + phosphate. It carries out the reaction D-erythrose 4-phosphate + H2O = D-erythrose + phosphate. Its function is as follows. Component of the mst2 complex which is a highly specific H3 lysine 14 (H3K14) acetyltransferase that functions together with gcn5 to regulate global levels of H3K14 acetylation (H3K14ac), critical for DNA damage checkpoint activation. Functionally, may also function as a sugar alcohol (polyol) phosphatase that prevents accumulation of toxic levels of polyol phosphates, which can impair glycolysis by inhibiting glucose-6-phosphate isomerase. This Schizosaccharomyces pombe (strain 972 / ATCC 24843) (Fission yeast) protein is Pdp3-interacting factor 1.